We begin with the raw amino-acid sequence, 795 residues long: Delta-1-pyrroline-5-carboxylate synthase (795 aa).

The segment at 1–361 is glutamate 5-kinase; the sequence is MLSQVYRYGF…FFSEVKPAGP (361 aa). Substrate-binding residues include Ser-117, Asp-223, and Asn-246. ATP is bound by residues 266–267 and 305–311; these read SD and MGGMEAK. An N6-succinyllysine mark is found at Lys-311, Lys-347, and Lys-550. Residues 362–795 are gamma-glutamyl phosphate reductase; sequence TVEQQGEMAR…NLPIPQRNTN (434 aa).

In the N-terminal section; belongs to the glutamate 5-kinase family. It in the C-terminal section; belongs to the gamma-glutamyl phosphate reductase family. As to quaternary structure, can form homodimers/multimers.

It is found in the mitochondrion matrix. It catalyses the reaction L-glutamate + ATP = L-glutamyl 5-phosphate + ADP. The enzyme catalyses L-glutamate 5-semialdehyde + phosphate + NADP(+) = L-glutamyl 5-phosphate + NADPH + H(+). Its pathway is amino-acid biosynthesis; L-proline biosynthesis; L-glutamate 5-semialdehyde from L-glutamate: step 1/2. It participates in amino-acid biosynthesis; L-proline biosynthesis; L-glutamate 5-semialdehyde from L-glutamate: step 2/2. Functionally, bifunctional enzyme that converts glutamate to glutamate 5-semialdehyde, an intermediate in the biosynthesis of proline, ornithine and arginine. The sequence is that of Delta-1-pyrroline-5-carboxylate synthase (ALDH18A1) from Pongo abelii (Sumatran orangutan).